Reading from the N-terminus, the 196-residue chain is Holliday junction branch migration complex subunit RuvA (196 aa).

A domain I region spans residues 1–63 (MYEYFKGIIS…EDAELLYGFA (63 aa)). The interval 64-142 (TEEEKQLFLS…AAGSPAESKA (79 aa)) is domain II. Positions 143 to 146 (PVQT) are flexible linker. The segment at 147-196 (ADNQELEEAMEAMLALGYKAAELKKIKKFFEGTTDTAENYIKSALKMLVK) is domain III.

It belongs to the RuvA family. In terms of assembly, homotetramer. Forms an RuvA(8)-RuvB(12)-Holliday junction (HJ) complex. HJ DNA is sandwiched between 2 RuvA tetramers; dsDNA enters through RuvA and exits via RuvB. An RuvB hexamer assembles on each DNA strand where it exits the tetramer. Each RuvB hexamer is contacted by two RuvA subunits (via domain III) on 2 adjacent RuvB subunits; this complex drives branch migration. In the full resolvosome a probable DNA-RuvA(4)-RuvB(12)-RuvC(2) complex forms which resolves the HJ.

It is found in the cytoplasm. Functionally, the RuvA-RuvB-RuvC complex processes Holliday junction (HJ) DNA during genetic recombination and DNA repair, while the RuvA-RuvB complex plays an important role in the rescue of blocked DNA replication forks via replication fork reversal (RFR). RuvA specifically binds to HJ cruciform DNA, conferring on it an open structure. The RuvB hexamer acts as an ATP-dependent pump, pulling dsDNA into and through the RuvAB complex. HJ branch migration allows RuvC to scan DNA until it finds its consensus sequence, where it cleaves and resolves the cruciform DNA. This chain is Holliday junction branch migration complex subunit RuvA, found in Streptococcus sanguinis (strain SK36).